A 276-amino-acid chain; its full sequence is uncharacterized protein (276 aa).

The protein to E.coli YjfZ.

This is an uncharacterized protein from Escherichia coli (strain K12).